The following is a 951-amino-acid chain: Valine--tRNA ligase (951 aa).

A 'HIGH' region motif is present at residues 42 to 52 (PNVTGSLHMGH). Positions 554–558 (KMSKS) match the 'KMSKS' region motif. Residue K557 coordinates ATP. A coiled-coil region spans residues 880–944 (AGLINKEDEL…AEAKAKLIEQ (65 aa)).

It belongs to the class-I aminoacyl-tRNA synthetase family. ValS type 1 subfamily. Monomer.

The protein resides in the cytoplasm. It catalyses the reaction tRNA(Val) + L-valine + ATP = L-valyl-tRNA(Val) + AMP + diphosphate. Functionally, catalyzes the attachment of valine to tRNA(Val). As ValRS can inadvertently accommodate and process structurally similar amino acids such as threonine, to avoid such errors, it has a 'posttransfer' editing activity that hydrolyzes mischarged Thr-tRNA(Val) in a tRNA-dependent manner. This Shigella flexneri protein is Valine--tRNA ligase.